Consider the following 320-residue polypeptide: MKDLYSRRINYMRISITDLCNLRCQYCMPAEGICKKDHKEVLTLEEITDIVKAGVGLGIDKVRITGGEPLVRNGIVEFIQMISNIDGIKDIAITTNGILLPRYAEALKEAGLKRVNISIDSLNPDKYREITRGGDLSKVLEGINECIRLGLTPVKLNVVAIGGYNDDEIEDFIQLTMDKPIDVRFIELMPIGEASQWGKDRFISNEEIVHRFKNLVPMETEKSSPAKYYQLPGGMGRVGLINPISSHFCGDCNRVRLTSDGKLKPCLHSNHEIDILDAVRNHPEKIQEVLASAILSKPEKHDLLTDSHEESNRGMSQIGG.

The 224-residue stretch at 4 to 227 (LYSRRINYMR…METEKSSPAK (224 aa)) folds into the Radical SAM core domain. Position 13 (Arg13) interacts with GTP. Cys20 and Cys24 together coordinate [4Fe-4S] cluster. Tyr26 provides a ligand contact to S-adenosyl-L-methionine. Cys27 contributes to the [4Fe-4S] cluster binding site. Residue Arg63 coordinates GTP. Residue Gly67 coordinates S-adenosyl-L-methionine. Thr94 contributes to the GTP binding site. Ser118 is an S-adenosyl-L-methionine binding site. A GTP-binding site is contributed by Lys155. An S-adenosyl-L-methionine-binding site is contributed by Met189. Residues Cys249 and Cys252 each coordinate [4Fe-4S] cluster. GTP is bound at residue 254–256 (RVR). A [4Fe-4S] cluster-binding site is contributed by Cys266. Over residues 300 to 312 (KHDLLTDSHEESN) the composition is skewed to basic and acidic residues. The segment at 300-320 (KHDLLTDSHEESNRGMSQIGG) is disordered.

This sequence belongs to the radical SAM superfamily. MoaA family. As to quaternary structure, monomer and homodimer. [4Fe-4S] cluster serves as cofactor.

It catalyses the reaction GTP + AH2 + S-adenosyl-L-methionine = (8S)-3',8-cyclo-7,8-dihydroguanosine 5'-triphosphate + 5'-deoxyadenosine + L-methionine + A + H(+). Its pathway is cofactor biosynthesis; molybdopterin biosynthesis. In terms of biological role, catalyzes the cyclization of GTP to (8S)-3',8-cyclo-7,8-dihydroguanosine 5'-triphosphate. In Alkaliphilus oremlandii (strain OhILAs) (Clostridium oremlandii (strain OhILAs)), this protein is GTP 3',8-cyclase.